A 447-amino-acid chain; its full sequence is UPF0328 protein ECU10_1870 (447 aa).

Composition is skewed to basic and acidic residues over residues 1–10 and 64–84; these read MPSDHPDFRS and HTEGCHTHEANPEPNTKHTET. Disordered regions lie at residues 1-103 and 147-173; these read MPSD…TATP and VKSQSVSHRAPITYQPPRPTTTSNPRI. Residues 92–103 show a composition bias toward pro residues; it reads CPPPHPGPTATP.

The protein belongs to the UPF0328 family.

The chain is UPF0328 protein ECU10_1870 from Encephalitozoon cuniculi (strain GB-M1) (Microsporidian parasite).